A 179-amino-acid polypeptide reads, in one-letter code: Large ribosomal subunit protein uL6 (179 aa).

Belongs to the universal ribosomal protein uL6 family. Part of the 50S ribosomal subunit.

This protein binds to the 23S rRNA, and is important in its secondary structure. It is located near the subunit interface in the base of the L7/L12 stalk, and near the tRNA binding site of the peptidyltransferase center. This is Large ribosomal subunit protein uL6 from Geobacter sulfurreducens (strain ATCC 51573 / DSM 12127 / PCA).